Consider the following 172-residue polypeptide: Nicotinamide-nucleotide adenylyltransferase (172 aa).

This sequence belongs to the archaeal NMN adenylyltransferase family.

The protein resides in the cytoplasm. The catalysed reaction is beta-nicotinamide D-ribonucleotide + ATP + H(+) = diphosphate + NAD(+). The protein operates within cofactor biosynthesis; NAD(+) biosynthesis; NAD(+) from nicotinamide D-ribonucleotide: step 1/1. This chain is Nicotinamide-nucleotide adenylyltransferase, found in Methanococcus aeolicus (strain ATCC BAA-1280 / DSM 17508 / OCM 812 / Nankai-3).